Consider the following 319-residue polypeptide: HTH-type transcriptional regulator YidZ (319 aa).

The region spanning 8–65 (LDLNLLLCLQLLMQERSVTKAAKRMNVTPSAVSKSLAKLRAWFDDPLFVNSPLGLSPT) is the HTH lysR-type domain. The H-T-H motif DNA-binding region spans 25-44 (VTKAAKRMNVTPSAVSKSLA).

This sequence belongs to the LysR transcriptional regulatory family.

Functionally, involved in anaerobic NO protection. In Escherichia coli O6:H1 (strain CFT073 / ATCC 700928 / UPEC), this protein is HTH-type transcriptional regulator YidZ.